The chain runs to 954 residues: Endogenous retrovirus group K member 25 Pol protein (954 aa).

The Reverse transcriptase domain occupies 57–245 (LEKGHIEPSF…TPFHYLGMQI (189 aa)). Residues 161–164 (LPQG) carry the LPQG motif. Positions 195 to 198 (YIDD) match the YXDD motif. The RNase H type-1 domain occupies 460–588 (LENALTVFTD…ADLLVSSALI (129 aa)). Asp469, Glu497, Asp515, and Asp580 together coordinate Mg(2+). The Integrase-type zinc-finger motif lies at 585-626 (SALIKAQELHALTHVNAAGLKNKFDVTWKLAKDIVQHCTQCQ). Residues His594, His598, Cys622, and Cys625 each coordinate Zn(2+). In terms of domain architecture, Integrase catalytic spans 640–801 (RGLCPNALWQ…TSAEQHLTGK (162 aa)). The segment at residues 809–857 (KLIWWKDNKNKTWEIGKVITWGRGFACVSPGENQLPVWIPTRHLKFYNE) is a DNA-binding region (integrase-type). The segment at 862-888 (AKKSTSAETETPQSSTVDSQDEQNGDV) is disordered. The span at 867–879 (SAETETPQSSTVD) shows a compositional bias: polar residues.

This sequence belongs to the beta type-B retroviral polymerase family. HERV class-II K(HML-2) pol subfamily.

It carries out the reaction DNA(n) + a 2'-deoxyribonucleoside 5'-triphosphate = DNA(n+1) + diphosphate. The catalysed reaction is Endonucleolytic cleavage to 5'-phosphomonoester.. In terms of biological role, early post-infection, the reverse transcriptase converts the viral RNA genome into double-stranded viral DNA. The RNase H domain of the reverse transcriptase performs two functions. It degrades the RNA template and specifically removes the RNA primer from the RNA/DNA hybrid. Following nuclear import, the integrase catalyzes the insertion of the linear, double-stranded viral DNA into the host cell chromosome. Endogenous Pol proteins may have kept, lost or modified their original function during evolution. This Homo sapiens (Human) protein is Endogenous retrovirus group K member 25 Pol protein (ERVK-25).